The chain runs to 294 residues: HTH-type transcriptional regulator ClcR (294 aa).

An HTH lysR-type domain is found at 1 to 58; it reads MEFRQLRYFIAVAEEGNIGAAARRLHISQPPITRQIQALEQDLGVVLFERTHRGVELT. The segment at residues 18-37 is a DNA-binding region (H-T-H motif); it reads IGAAARRLHISQPPITRQIQ.

The protein belongs to the LysR transcriptional regulatory family.

Its subcellular location is the cytoplasm. Involved in regulation of chlorinated catechol metabolism. Transcriptional activator of the clcABD chlorocatechol oxidative operon. The chain is HTH-type transcriptional regulator ClcR (clcR) from Pseudomonas putida (Arthrobacter siderocapsulatus).